Here is a 299-residue protein sequence, read N- to C-terminus: Putative activator of 90 kDa heat shock protein ATPase homolog 2 (299 aa).

The protein belongs to the AHA1 family.

In terms of biological role, co-chaperone that stimulates HSP90 ATPase activity. The sequence is that of Putative activator of 90 kDa heat shock protein ATPase homolog 2 from Homo sapiens (Human).